A 319-amino-acid polypeptide reads, in one-letter code: Olfactory receptor 51F1 (319 aa).

Residues 1 to 37 lie on the Extracellular side of the membrane; sequence MLQNQDTMEILSNSTSKFPTFLLTGIPGLESAHVWIS. A helical membrane pass occupies residues 38 to 58; it reads IPFCCFYAIALSGNSVILFVI. At 59–75 the chain is on the cytoplasmic side; that stretch reads ITQQSLHEPMYYFLFRL. The chain crosses the membrane as a helical span at residues 76 to 96; the sequence is SATDLGLTVSSLSTTLGILWF. Topologically, residues 97 to 106 are extracellular; it reads EAREISLYSC. C106 and C188 are joined by a disulfide. The chain crosses the membrane as a helical span at residues 107–127; that stretch reads IVQMFFLHGFTFMESGVLVAT. Residues 128–149 lie on the Cytoplasmic side of the membrane; it reads AFDRYVAICDPLRYTTILTNSR. The helical transmembrane segment at 150–170 threads the bilayer; the sequence is IIQMGLLMITRAIVLILPLLL. Residues 171–211 are Extracellular-facing; sequence LLKPLYFCRMNALSHSYCYHPDVIQLACSDIRANSICGLID. A helical transmembrane segment spans residues 212-232; the sequence is LILTTGIDTPCIVLSYILIIH. Residues 233 to 249 are Cytoplasmic-facing; the sequence is SVLRIASPEEWHKVFST. The chain crosses the membrane as a helical span at residues 250 to 270; that stretch reads CVSHVGAVAFFYIHMLSLSLV. At 271–279 the chain is on the extracellular side; sequence YRYGRSAPR. A helical transmembrane segment spans residues 280-300; it reads VVHSVMANVYLLLPPVLNPII. The Cytoplasmic segment spans residues 301 to 319; it reads DSVKTKQIRKAMLSLLLTK.

It belongs to the G-protein coupled receptor 1 family.

The protein resides in the cell membrane. Functionally, odorant receptor. In Homo sapiens (Human), this protein is Olfactory receptor 51F1 (OR51F1).